Consider the following 390-residue polypeptide: Phosphoglycerate kinase (390 aa).

Substrate is bound by residues 21–23 (DLN), Arg-36, 59–62 (HLGR), Arg-114, and Arg-147. ATP contacts are provided by residues Lys-198, Glu-314, and 340–343 (GGDT).

This sequence belongs to the phosphoglycerate kinase family. As to quaternary structure, monomer.

The protein localises to the cytoplasm. The enzyme catalyses (2R)-3-phosphoglycerate + ATP = (2R)-3-phospho-glyceroyl phosphate + ADP. Its pathway is carbohydrate degradation; glycolysis; pyruvate from D-glyceraldehyde 3-phosphate: step 2/5. In Buchnera aphidicola subsp. Acyrthosiphon pisum (strain APS) (Acyrthosiphon pisum symbiotic bacterium), this protein is Phosphoglycerate kinase (pgk).